The sequence spans 287 residues: 4-hydroxybenzoate octaprenyltransferase (287 aa).

A run of 5 helical transmembrane segments spans residues 20–38 (IGTL…FAAG), 95–115 (IVFL…NPLV), 211–231 (IIAA…LIAE), 235–255 (IYGG…KLIF), and 266–286 (FLNN…DYLV).

The protein belongs to the UbiA prenyltransferase family. Requires Mg(2+) as cofactor.

The protein localises to the cell inner membrane. The catalysed reaction is all-trans-octaprenyl diphosphate + 4-hydroxybenzoate = 4-hydroxy-3-(all-trans-octaprenyl)benzoate + diphosphate. Its pathway is cofactor biosynthesis; ubiquinone biosynthesis. Its function is as follows. Catalyzes the prenylation of para-hydroxybenzoate (PHB) with an all-trans polyprenyl group. Mediates the second step in the final reaction sequence of ubiquinone-8 (UQ-8) biosynthesis, which is the condensation of the polyisoprenoid side chain with PHB, generating the first membrane-bound Q intermediate 3-octaprenyl-4-hydroxybenzoate. This chain is 4-hydroxybenzoate octaprenyltransferase, found in Shewanella piezotolerans (strain WP3 / JCM 13877).